We begin with the raw amino-acid sequence, 156 residues long: Ribosomal RNA large subunit methyltransferase H (156 aa).

Residues leucine 73, glycine 104, and 123–128 (LSPLTL) each bind S-adenosyl-L-methionine.

The protein belongs to the RNA methyltransferase RlmH family. In terms of assembly, homodimer.

It localises to the cytoplasm. The enzyme catalyses pseudouridine(1915) in 23S rRNA + S-adenosyl-L-methionine = N(3)-methylpseudouridine(1915) in 23S rRNA + S-adenosyl-L-homocysteine + H(+). Functionally, specifically methylates the pseudouridine at position 1915 (m3Psi1915) in 23S rRNA. The chain is Ribosomal RNA large subunit methyltransferase H from Photorhabdus laumondii subsp. laumondii (strain DSM 15139 / CIP 105565 / TT01) (Photorhabdus luminescens subsp. laumondii).